The following is a 148-amino-acid chain: MKEIVSKVKEIAESACKKYNLELFDIKYYNKSGKWFLEIVIDNPLDYVSTKDCENISREVEFQLDKLDIIPQRYYLTVSSPGLDRPLRSIDDFKRFINNKVKIKLENETIIGYIKDVKDSVIFLEENNKKIKEIKYNQIKKANLEIDI.

Belongs to the RimP family.

Its subcellular location is the cytoplasm. Required for maturation of 30S ribosomal subunits. This chain is Ribosome maturation factor RimP, found in Thermosipho africanus (strain TCF52B).